We begin with the raw amino-acid sequence, 500 residues long: Zinc finger protein PLAG1 (500 aa).

The segment at 1–30 is disordered; it reads MATVIPGDLSEVRDTQKVPSGKRKRGETKP. Positions 2–84 are interaction with KPNA2; sequence ATVIPGDLSE…SKYKLQRHMA (83 aa). The Nuclear localization signal signature appears at 22–25; the sequence is KRKR. 7 C2H2-type zinc fingers span residues 34 to 56, 62 to 86, 92 to 114, 121 to 143, 150 to 172, 185 to 207, and 213 to 236; these read FPCQ…SYSH, YKCI…MATH, HKCN…LHTH, FKCE…LALH, LTCK…LKSH, HQCE…MVVH, and FLCQ…KKSH. Residues 41–242 are decreased nuclear import with localization in the nucleus but also in the cytoplasm; sequence KAFNSVEKLK…KKSHNQELLK (202 aa). The repression domain; contains 3 sumoylation motifs and massively decrease transcription activity stretch occupies residues 243 to 384; it reads VKTEPVDFLD…QASSSSKLGL (142 aa). Positions 243–500 are activates transcription; Inhibition of nuclear import due to lack of NLS and KPNA2 interaction; sequence VKTEPVDFLD…TLPRFHQAFQ (258 aa). Glycyl lysine isopeptide (Lys-Gly) (interchain with G-Cter in SUMO) cross-links involve residues Lys-244 and Lys-263. A disordered region spans residues 365–388; it reads GGVPSSSQDSQASSSSKLGLDPQI. The segment covering 369-380 has biased composition (low complexity); it reads SSSQDSQASSSS. Positions 385–500 are massively activates transcription; the sequence is DPQIGSLDDG…TLPRFHQAFQ (116 aa).

It belongs to the krueppel C2H2-type zinc-finger protein family. In terms of assembly, interacts with KPNA2, which escorts protein to the nucleus via interaction with nuclear localization signal. Interacts with E3 SUMO-protein ligase PIAS1, PIAS2 and PIAS4. Post-translationally, sumoylated with SUMO1; which inhibits transcriptional activity, but does not affect nuclear localization. Blockers of sumoylation pathway such as SENP3 and inactive UBE2I increases transcriptional capacity. Sumoylation is increased in the presence of PIAS1. Acetylated by lysine acetyltransferase EP300; which activates transcriptional capacity. Lysine residues that are sumoylated also seem to be target for acetylation. Expressed in fetal tissues such as lung, liver and kidney. Not detected or weak detection in normal adult tissues, but highly expressed in salivary gland with benign or malignant pleiomorphic adenomas with or without 8q12 aberrations, with preferential occurrence in benign tumors.

It localises to the nucleus. In terms of biological role, transcription factor whose activation results in up-regulation of target genes, such as IGFII, leading to uncontrolled cell proliferation: when overexpressed in cultured cells, higher proliferation rate and transformation are observed. Other target genes such as CRLF1, CRABP2, CRIP2, PIGF are strongly induced in cells with PLAG1 induction. Proto-oncogene whose ectopic expression can trigger the development of pleomorphic adenomas of the salivary gland and lipoblastomas. Overexpression is associated with up-regulation of IGFII, is frequently observed in hepatoblastoma, common primary liver tumor in childhood. Cooperates with CBFB-MYH11, a fusion gene important for myeloid leukemia. The sequence is that of Zinc finger protein PLAG1 (PLAG1) from Homo sapiens (Human).